Here is a 645-residue protein sequence, read N- to C-terminus: ATP-dependent DNA helicase Rep (645 aa).

The UvrD-like helicase ATP-binding domain occupies 1-280; that stretch reads MSLNFSQKNA…IKMEHNYRSS (280 aa). ATP is bound by residues 22–29 and arginine 278; that span reads AGAGSGKT. Residues 281–562 enclose the UvrD-like helicase C-terminal domain; it reads GRILKAANSL…QLMTLHASKG (282 aa).

This sequence belongs to the helicase family. UvrD subfamily. In terms of assembly, homodimer.

It catalyses the reaction Couples ATP hydrolysis with the unwinding of duplex DNA by translocating in the 3'-5' direction.. It carries out the reaction ATP + H2O = ADP + phosphate + H(+). Rep helicase is a single-stranded DNA-dependent ATPase involved in DNA replication; it can initiate unwinding at a nick in the DNA. It binds to the single-stranded DNA and acts in a progressive fashion along the DNA in the 3' to 5' direction. This chain is ATP-dependent DNA helicase Rep, found in Buchnera aphidicola subsp. Acyrthosiphon pisum (strain APS) (Acyrthosiphon pisum symbiotic bacterium).